Reading from the N-terminus, the 328-residue chain is Tetraacyldisaccharide 4'-kinase (328 aa).

55–62 contacts ATP; it reads TAGGNGKT.

It belongs to the LpxK family.

The catalysed reaction is a lipid A disaccharide + ATP = a lipid IVA + ADP + H(+). Its pathway is glycolipid biosynthesis; lipid IV(A) biosynthesis; lipid IV(A) from (3R)-3-hydroxytetradecanoyl-[acyl-carrier-protein] and UDP-N-acetyl-alpha-D-glucosamine: step 6/6. Functionally, transfers the gamma-phosphate of ATP to the 4'-position of a tetraacyldisaccharide 1-phosphate intermediate (termed DS-1-P) to form tetraacyldisaccharide 1,4'-bis-phosphate (lipid IVA). The sequence is that of Tetraacyldisaccharide 4'-kinase from Escherichia coli (strain 55989 / EAEC).